The chain runs to 86 residues: Sodium channel neurotoxin MeuNaTxalpha-5 (86 aa).

The signal sequence occupies residues 1 to 19; that stretch reads MNYLILISFALLVITGVES. The LCN-type CS-alpha/beta domain maps to 21–85; that stretch reads RDAYIAKPHN…VPIRIPGKCH (65 aa). Intrachain disulfides connect Cys-31/Cys-84, Cys-35/Cys-57, Cys-43/Cys-67, and Cys-47/Cys-69. Position 86 (Arg-86) is a propeptide, removed by a carboxypeptidase.

The protein belongs to the long (4 C-C) scorpion toxin superfamily. Sodium channel inhibitor family. Alpha subfamily. Expressed by the venom gland.

The protein resides in the secreted. Alpha toxins bind voltage-independently at site-3 of sodium channels (Nav) and inhibit the inactivation of the activated channels, thereby blocking neuronal transmission. This toxin inhibits inactivation of Nav1.6/SCN8A (EC(50)=790 nM) and drosophila DmNav1 (EC(50)=280 nM). The toxin (1 uM) does not significantly shift the midpoint of activation at the two channels, but induces a significant depolarizing shift in the V(1/2) of inactivation of the channels. Has antimicrobial activity. This chain is Sodium channel neurotoxin MeuNaTxalpha-5, found in Mesobuthus eupeus (Lesser Asian scorpion).